The following is a 238-amino-acid chain: uncharacterized protein (238 aa).

This is an uncharacterized protein from Acheta domesticus (House cricket).